The sequence spans 161 residues: MRHNKKFNHLGRTASHRSAMLSNMACSLIKHKRITTTVAKAKALKKFVEPLITKSKEDTTNSRRVVFSNLQDKLAVTELFKEISVKIADRPGGYTRIIKTGNRLGDNAEMCFIELVDYNENMAKEKVAKKATRTRRSKKTTEAAPAAEVPATEEPKAESAE.

The interval 126-161 (KVAKKATRTRRSKKTTEAAPAAEVPATEEPKAESAE) is disordered. Basic residues predominate over residues 129–138 (KKATRTRRSK). Residues 142 to 152 (EAAPAAEVPAT) show a composition bias toward low complexity.

The protein belongs to the bacterial ribosomal protein bL17 family. As to quaternary structure, part of the 50S ribosomal subunit. Contacts protein L32.

This is Large ribosomal subunit protein bL17 from Bacteroides fragilis (strain ATCC 25285 / DSM 2151 / CCUG 4856 / JCM 11019 / LMG 10263 / NCTC 9343 / Onslow / VPI 2553 / EN-2).